The sequence spans 250 residues: Putative ABC transporter ATP-binding protein YjkB (250 aa).

Positions 13 to 245 (ISFRSVRKSY…PQHEAAKEFL (233 aa)) constitute an ABC transporter domain. ATP is bound at residue 49-56 (GPSGSGKS).

Belongs to the ABC transporter superfamily.

This Bacillus subtilis (strain 168) protein is Putative ABC transporter ATP-binding protein YjkB (yjkB).